Consider the following 504-residue polypeptide: GTPase Der (504 aa).

In terms of domain architecture, EngA-type G 1 spans Pro-3–Leu-166. Residues Gly-9 to Ser-16, Asp-56 to Ile-60, and Asn-118 to Asp-121 contribute to the GTP site. The interval Val-171–Asp-190 is disordered. Residues Asp-172–Asp-190 are compositionally biased toward acidic residues. Positions Ile-216–Thr-389 constitute an EngA-type G 2 domain. Residues Gly-222 to Ser-229, Asp-269 to Val-273, and Asn-334 to Asp-337 contribute to the GTP site. In terms of domain architecture, KH-like spans Lys-390–Asn-474.

Belongs to the TRAFAC class TrmE-Era-EngA-EngB-Septin-like GTPase superfamily. EngA (Der) GTPase family. As to quaternary structure, associates with the 50S ribosomal subunit.

Functionally, GTPase that plays an essential role in the late steps of ribosome biogenesis. This Glaesserella parasuis serovar 5 (strain SH0165) (Haemophilus parasuis) protein is GTPase Der.